Consider the following 428-residue polypeptide: MSTLAILGAGAKAVAVAAKASVLRDMGVEVPDVVAVERIGVAANWQASGGWTDGAHRLGTSPEKDVGFPYRSALVPRRNAELDERMTRYSWQSYLIATASFAEWIDRGRPAPTHRRWSQYLSWVADHVGMTVVHGEVEQLAVTGDRWALHTHETTVHADALMITGPGQAEKSLLPGNPRMLSIAQFWDRAANHDRISAERVAVIGGGETAAAMLNELFRHRVSSITVISPQATLFTRGEGYFENSLFSDPTNWPALTLAERRDALARTDRGVFSSSVQEALLADDRIHHLRGRVTHAVGVQGQIRLTLSTNRGSENLETVHGFDLVIDGSGADSLWFAPLFSQEALDLLELGLGGPLSSERLQEAIGYDLAVTDVTPKLFLPNLSGLTQGPGFPNLSCLGLLSDRVLGSTLGPTNYPARRRHDERQPL.

An N-terminal signal peptide occupies residues 1-20 (MSTLAILGAGAKAVAVAAKA).

Belongs to the lysine N(6)-hydroxylase/L-ornithine N(5)-oxygenase family. FAD is required as a cofactor.

It carries out the reaction L-lysine + NADPH + O2 = N(6)-hydroxy-L-lysine + NADP(+) + H2O. Its pathway is siderophore biosynthesis; mycobactin biosynthesis. In terms of biological role, flavoprotein monooxygenase required for N-hydroxylation of the two acylated lysine residues during mycobactin assembly, thus producing the hydroxamate groups necessary for iron sequestration. Is also able, but less efficiently, to hydroxylate L-lysine (non acylated) in vitro. The chain is L-lysine N6-monooxygenase MbtG (mbtG) from Mycolicibacterium paratuberculosis (strain ATCC BAA-968 / K-10) (Mycobacterium paratuberculosis).